Consider the following 400-residue polypeptide: Subtilisin-like protease 7 (400 aa).

The signal sequence occupies residues Met-1–Gly-20. A propeptide spanning residues Ala-21 to Asn-119 is cleaved from the precursor. The region spanning Lys-36–Ile-118 is the Inhibitor I9 domain. Positions Ser-129 to Lys-400 constitute a Peptidase S8 domain. Active-site charge relay system residues include Asp-161 and His-192. The N-linked (GlcNAc...) asparagine glycan is linked to Asn-252. The Charge relay system role is filled by Ser-346. A glycan (N-linked (GlcNAc...) asparagine) is linked at Asn-396.

This sequence belongs to the peptidase S8 family.

The protein resides in the secreted. In terms of biological role, secreted subtilisin-like serine protease with keratinolytic activity that contributes to pathogenicity. This chain is Subtilisin-like protease 7 (SUB7), found in Arthroderma gypseum (strain ATCC MYA-4604 / CBS 118893) (Microsporum gypseum).